The primary structure comprises 498 residues: ATP synthase subunit beta, chloroplastic (498 aa).

172-179 (GGAGVGKT) is a binding site for ATP.

The protein belongs to the ATPase alpha/beta chains family. In terms of assembly, F-type ATPases have 2 components, CF(1) - the catalytic core - and CF(0) - the membrane proton channel. CF(1) has five subunits: alpha(3), beta(3), gamma(1), delta(1), epsilon(1). CF(0) has four main subunits: a(1), b(1), b'(1) and c(9-12).

The protein localises to the plastid. It is found in the chloroplast thylakoid membrane. The catalysed reaction is ATP + H2O + 4 H(+)(in) = ADP + phosphate + 5 H(+)(out). Functionally, produces ATP from ADP in the presence of a proton gradient across the membrane. The catalytic sites are hosted primarily by the beta subunits. This is ATP synthase subunit beta, chloroplastic from Trochodendron aralioides (Wheel tree).